A 516-amino-acid polypeptide reads, in one-letter code: Melianol synthase CYP71BQ17 (516 aa).

A helical transmembrane segment spans residues 14–34 (MPHLPSLPVSLSFLLFFLMLV). Cysteine 454 contacts heme.

It belongs to the cytochrome P450 family. Requires heme as cofactor. Mainly expressed in roots and, to a lesser extent, in stems and old leaves.

Its subcellular location is the membrane. The enzyme catalyses dihydroniloticin + 2 reduced [NADPH--hemoprotein reductase] + 2 O2 = melianol + 2 oxidized [NADPH--hemoprotein reductase] + 3 H2O + 2 H(+). It functions in the pathway secondary metabolite biosynthesis; terpenoid biosynthesis. In terms of biological role, monooxygenase involved in the biosynthesis of quassinoids triterpene natural products such as ailanthone, chaparrinone, glaucarubinone and amarolide, allelopathic degraded triterpene lactones inhibiting the growth of other plants, and possessing antimalarial, antifeedant, insecticidal, anti-inflammatory and anticancer activities. Catalyzes the conversion of dihydroniloticin to the protolimonoid melianol. This chain is Melianol synthase CYP71BQ17, found in Ailanthus altissima (Tree-of-heaven).